Here is a 162-residue protein sequence, read N- to C-terminus: Large ribosomal subunit protein uL10 (162 aa).

The protein belongs to the universal ribosomal protein uL10 family. In terms of assembly, part of the ribosomal stalk of the 50S ribosomal subunit. The N-terminus interacts with L11 and the large rRNA to form the base of the stalk. The C-terminus forms an elongated spine to which L12 dimers bind in a sequential fashion forming a multimeric L10(L12)X complex.

In terms of biological role, forms part of the ribosomal stalk, playing a central role in the interaction of the ribosome with GTP-bound translation factors. The polypeptide is Large ribosomal subunit protein uL10 (Borreliella afzelii (strain PKo) (Borrelia afzelii)).